The following is a 381-amino-acid chain: Selenoprotein P (381 aa).

The first 19 residues, Met1 to Thr19, serve as a signal peptide directing secretion. A glycan (N-linked (GlcNAc...) asparagine) is linked at Asn46. Position 59 (Sec59) is a non-standard amino acid, selenocysteine. Asn83, Asn119, and Asn128 each carry an N-linked (GlcNAc...) asparagine glycan. Positions Ser202 to Asp268 are disordered. Over residues His204–His217 the composition is skewed to basic residues. The segment covering Leu218–Pro229 has biased composition (polar residues). Basic residues predominate over residues Leu243–Gln255. Ser266 is subject to Phosphoserine. Non-standard amino acids (selenocysteine) are located at Sec318 and Sec330. N-linked (GlcNAc...) asparagine glycosylation is present at Asn338. Non-standard amino acids (selenocysteine) are located at Sec345, Sec352, Sec367, Sec369, Sec376, and Sec378. A disordered region spans residues Sec352–Asn381. A compositionally biased stretch (polar residues) spans Gln353 to Sec369.

This sequence belongs to the selenoprotein P family. Phosphorylation sites are present in the extracellular medium.

The protein localises to the secreted. Might be responsible for some of the extracellular antioxidant defense properties of selenium or might be involved in the transport of selenium. May supply selenium to tissues such as brain and testis. The protein is Selenoprotein P of Pongo abelii (Sumatran orangutan).